A 148-amino-acid chain; its full sequence is Large ribosomal subunit protein uL15 (148 aa).

Positions 1 to 11 are enriched in basic and acidic residues; sequence MSEPIKLHDLR. Positions 1 to 52 are disordered; it reads MSEPIKLHDLRPAAGSNKAKTRVGRGEASKGKTAGRGTKGTKARKQVSAAFE.

This sequence belongs to the universal ribosomal protein uL15 family. In terms of assembly, part of the 50S ribosomal subunit.

Binds to the 23S rRNA. The protein is Large ribosomal subunit protein uL15 of Corynebacterium glutamicum (strain R).